The following is a 109-amino-acid chain: MSAQPVDIQIFGRSLRVNCPPEQQDALNMAAVDLNERLQDLKVRTRVTNTEQLVFIAALNVCHELAQERLKTRDYASNMEQRIRMLQQTIEQALLEQGRISERQDAQFE.

Residues 71–99 (KTRDYASNMEQRIRMLQQTIEQALLEQGR) adopt a coiled-coil conformation.

This sequence belongs to the ZapA family. Type 1 subfamily. As to quaternary structure, homodimer. Interacts with FtsZ.

It is found in the cytoplasm. In terms of biological role, activator of cell division through the inhibition of FtsZ GTPase activity, therefore promoting FtsZ assembly into bundles of protofilaments necessary for the formation of the division Z ring. It is recruited early at mid-cell but it is not essential for cell division. The protein is Cell division protein ZapA of Serratia proteamaculans (strain 568).